The primary structure comprises 336 residues: Inositol 2-dehydrogenase (336 aa).

The protein belongs to the Gfo/Idh/MocA family. Homotetramer.

It carries out the reaction myo-inositol + NAD(+) = scyllo-inosose + NADH + H(+). Involved in the oxidation of myo-inositol (MI) to 2-keto-myo-inositol (2KMI or 2-inosose). The protein is Inositol 2-dehydrogenase of Salmonella agona (strain SL483).